The chain runs to 167 residues: Large ribosomal subunit protein uL10 (167 aa).

Belongs to the universal ribosomal protein uL10 family. Part of the ribosomal stalk of the 50S ribosomal subunit. The N-terminus interacts with L11 and the large rRNA to form the base of the stalk. The C-terminus forms an elongated spine to which L12 dimers bind in a sequential fashion forming a multimeric L10(L12)X complex.

Its function is as follows. Forms part of the ribosomal stalk, playing a central role in the interaction of the ribosome with GTP-bound translation factors. This is Large ribosomal subunit protein uL10 from Paraburkholderia phytofirmans (strain DSM 17436 / LMG 22146 / PsJN) (Burkholderia phytofirmans).